Reading from the N-terminus, the 347-residue chain is G-protein coupled receptor homolog U12 (347 aa).

6 helical membrane-spanning segments follow: residues 36–56, 67–87, 103–124, 147–167, 194–214, and 236–256; these read GITL…MILY, FYVI…FFMT, LVYF…IIAT, IGIL…FVKT, IVFS…FYVI, and ILLL…ICEI. Cys-101 and Cys-176 are disulfide-bonded. The interval 321–347 is disordered; the sequence is QKRKDSDASEHDQNSKSKASVEKNQPL. Over residues 322 to 341 the composition is skewed to basic and acidic residues; it reads KRKDSDASEHDQNSKSKASV.

Belongs to the G-protein coupled receptor 1 family.

It is found in the membrane. Probable G-protein coupled receptor. This chain is G-protein coupled receptor homolog U12 (U12), found in Homo sapiens (Human).